A 281-amino-acid polypeptide reads, in one-letter code: MGKFCCFTSASEVVGGQSSSRSGKGRSDEGMIKYGFSLVKGKANHPMEDYHVANFINIQDHELGLFAIYDGHMGDSVPAYLQKRLFSNILKEGEFWVDPRRSIAKAYEKTDQAILSNSSDLGRGGSTAVTAILINGRKLWIANVGDSRAVLSHGGAITQMSTDHEPRTERSSIEDRGGFVSNLPGDVPRVNGQLAVSRAFGDKGLKTHLSSEPDIKEATVDSQTDVLLLASDGIWKVMTNEEAMEIARRVKDPQKAAKELTAEALRRESKDDISCVVVRFR.

A PPM-type phosphatase domain is found at 33 to 280 (KYGFSLVKGK…DDISCVVVRF (248 aa)). Positions 70, 71, 232, and 271 each coordinate Mn(2+).

It belongs to the PP2C family. Interacts with phytochromes (via N-terminus). The cofactor is Mg(2+). Requires Mn(2+) as cofactor.

The protein localises to the nucleus. The catalysed reaction is O-phospho-L-seryl-[protein] + H2O = L-seryl-[protein] + phosphate. The enzyme catalyses O-phospho-L-threonyl-[protein] + H2O = L-threonyl-[protein] + phosphate. Functionally, involved in the regulation of phytochrome signaling. May regulate phytochrome-interacting factor 3 (PIF3) through the dephosphorylation of phytochrome. This chain is Probable protein phosphatase 2C 9, found in Arabidopsis thaliana (Mouse-ear cress).